Reading from the N-terminus, the 100-residue chain is Urease subunit gamma (100 aa).

The protein belongs to the urease gamma subunit family. As to quaternary structure, heterotrimer of UreA (gamma), UreB (beta) and UreC (alpha) subunits. Three heterotrimers associate to form the active enzyme.

It is found in the cytoplasm. It catalyses the reaction urea + 2 H2O + H(+) = hydrogencarbonate + 2 NH4(+). It participates in nitrogen metabolism; urea degradation; CO(2) and NH(3) from urea (urease route): step 1/1. In Blochmanniella floridana, this protein is Urease subunit gamma.